The chain runs to 241 residues: 2-C-methyl-D-erythritol 4-phosphate cytidylyltransferase (241 aa).

The protein belongs to the IspD/TarI cytidylyltransferase family. IspD subfamily.

It carries out the reaction 2-C-methyl-D-erythritol 4-phosphate + CTP + H(+) = 4-CDP-2-C-methyl-D-erythritol + diphosphate. Its pathway is isoprenoid biosynthesis; isopentenyl diphosphate biosynthesis via DXP pathway; isopentenyl diphosphate from 1-deoxy-D-xylulose 5-phosphate: step 2/6. Functionally, catalyzes the formation of 4-diphosphocytidyl-2-C-methyl-D-erythritol from CTP and 2-C-methyl-D-erythritol 4-phosphate (MEP). The sequence is that of 2-C-methyl-D-erythritol 4-phosphate cytidylyltransferase from Baumannia cicadellinicola subsp. Homalodisca coagulata.